The sequence spans 65 residues: Large ribosomal subunit protein bL35 (65 aa).

It belongs to the bacterial ribosomal protein bL35 family.

The protein is Large ribosomal subunit protein bL35 of Prochlorococcus marinus subsp. pastoris (strain CCMP1986 / NIES-2087 / MED4).